The following is a 255-amino-acid chain: Phosphatidylcholine synthase (255 aa).

Residues 1 to 13 (MNPIKPPFTLNQY) lie on the Cytoplasmic side of the membrane. A helical membrane pass occupies residues 14–34 (FAAWFVHVFTASAACIGVFSL). Residues 35 to 42 (YKIYQHDY) lie on the Periplasmic side of the membrane. A helical membrane pass occupies residues 43 to 63 (VFALWLMAITVFIDAVDGSLA). Residues 64–76 (RLVHVKSVLPKID) lie on the Cytoplasmic side of the membrane. The helical transmembrane segment at 77–97 (GALLDNIVDYLNYVITPCFFL) threads the bilayer. Over 98–103 (LVKPGM) the chain is Periplasmic. A helical membrane pass occupies residues 104-124 (LPADYVVPITAAITITSAYQF). Topologically, residues 125-133 (CQDDAKTPD) are cytoplasmic. The helical transmembrane segment at 134–154 (HFFKGFPCYWNITVFYMYIFN) threads the bilayer. Thr-155 is a topological domain (periplasmic). The helical transmembrane segment at 156 to 175 (SMIVNTVLLSLFCVLIFIPV) threads the bilayer. The Cytoplasmic portion of the chain corresponds to 176 to 190 (KYVYPSRLDYLTESR). The helical transmembrane segment at 191 to 211 (VLKILMHCCSALYGISSFCLL) threads the bilayer. The Periplasmic segment spans residues 212 to 217 (VNYPET). The helical transmembrane segment at 218–238 (NKLWVSLSLGYVGMYLFLSFY) threads the bilayer. Residues 239-255 (RTYYPMFKAKITANNKD) lie on the Cytoplasmic side of the membrane.

This sequence belongs to the CDP-alcohol phosphatidyltransferase class-I family. The cofactor is Mn(2+).

It is found in the cell inner membrane. The enzyme catalyses a CDP-1,2-diacyl-sn-glycerol + choline = a 1,2-diacyl-sn-glycero-3-phosphocholine + CMP + H(+). Its function is as follows. Condenses choline with CDP-diglyceride to produce phosphatidylcholine and CMP. Affects virulence of this bacterium when there is a complete loss of phosphatidylcholine formation due to absence of both the synthase (pcs) and the methylation (pmtA) pathways. Reduced virulence results from lowered yields of bacteria within host macrophages and because of loss of high multiplicity cytotoxicity. The chain is Phosphatidylcholine synthase from Legionella pneumophila subsp. pneumophila (strain Philadelphia 1 / ATCC 33152 / DSM 7513).